A 434-amino-acid chain; its full sequence is BEN domain-containing protein 7 (434 aa).

Residues Lys16, Lys56, and Lys85 each participate in a glycyl lysine isopeptide (Lys-Gly) (interchain with G-Cter in SUMO2) cross-link. 2 disordered regions span residues 96–151 (PQRS…SNGE) and 212–262 (SRKR…ERTS). Polar residues predominate over residues 97–150 (QRSNSSTEASQGLHSNSRGAWNELPTQSGQFSGQSGPRSRTFQTQPHISASSNG). Over residues 212–222 (SRKRNKKKKVL) the composition is skewed to basic residues. Lys244 participates in a covalent cross-link: Glycyl lysine isopeptide (Lys-Gly) (interchain with G-Cter in SUMO2). A BEN domain is found at 289–399 (GFDVFMPKSQ…RRLKRGSAEV (111 aa)). Thr326 carries the post-translational modification Phosphothreonine. Ser330 carries the phosphoserine modification. The segment at 414–434 (TGHTFVIKRETPEDPEPGSVA) is disordered.

The chain is BEN domain-containing protein 7 (Bend7) from Mus musculus (Mouse).